The chain runs to 437 residues: Epsilon-sarcoglycan (437 aa).

At 1-317 the chain is on the extracellular side; sequence MQLPRWWELG…LKSRDYYTDF (317 aa). A glycan (N-linked (GlcNAc...) asparagine) is linked at N200. Residues 318-338 traverse the membrane as a helical segment; the sequence is LITLAVPSAVALVLFLILAYI. The Cytoplasmic portion of the chain corresponds to 339–437; sequence MCCRREGVEK…QQQTTGKWYP (99 aa).

This sequence belongs to the sarcoglycan alpha/epsilon family. Post-translationally, N-glycosylated. In terms of processing, ubiquitinated, leading to its degradation by the proteasome. In terms of tissue distribution, ubiquitous.

The protein localises to the cell membrane. The protein resides in the sarcolemma. Its subcellular location is the cytoplasm. It is found in the cytoskeleton. It localises to the cell projection. The protein localises to the dendrite. The protein resides in the golgi apparatus. In terms of biological role, component of the sarcoglycan complex, a subcomplex of the dystrophin-glycoprotein complex which forms a link between the F-actin cytoskeleton and the extracellular matrix. This is Epsilon-sarcoglycan (SGCE) from Homo sapiens (Human).